Here is a 342-residue protein sequence, read N- to C-terminus: Sorting nexin-15 (342 aa).

Positions Met1–Arg130 constitute a PX domain. A 1,2-diacyl-sn-glycero-3-phospho-(1D-myo-inositol-3-phosphate)-binding residues include Arg51, Ser53, Arg87, and Arg96. Arg105 carries the post-translational modification Omega-N-methylarginine. Ser201 and Ser227 each carry phosphoserine. The disordered stretch occupies residues Asp245–Ala267. Residues Thr265–Pro342 form the MIT domain.

It belongs to the sorting nexin family. In terms of assembly, homodimer. Interacts with SNX1, SNX2 and SNX4. As to expression, widely expressed.

It localises to the cytoplasm. Its subcellular location is the membrane. The protein localises to the cytoplasmic vesicle membrane. Its function is as follows. May be involved in several stages of intracellular trafficking. Overexpression of SNX15 disrupts the normal trafficking of proteins from the plasma membrane to recycling endosomes or the TGN. This chain is Sorting nexin-15 (SNX15), found in Homo sapiens (Human).